The sequence spans 339 residues: 4-hydroxy-2-oxovalerate aldolase 3 (339 aa).

One can recognise a Pyruvate carboxyltransferase domain in the interval Ile7–Ala259. Arg15–Asp16 contacts substrate. Asp16 contributes to the Mn(2+) binding site. His19 acts as the Proton acceptor in catalysis. Substrate is bound by residues Ser169 and His198. The Mn(2+) site is built by His198 and His200. Tyr289 lines the substrate pocket.

The protein belongs to the 4-hydroxy-2-oxovalerate aldolase family.

The catalysed reaction is (S)-4-hydroxy-2-oxopentanoate = acetaldehyde + pyruvate. This Rhodococcus opacus (strain B4) protein is 4-hydroxy-2-oxovalerate aldolase 3.